Here is a 137-residue protein sequence, read N- to C-terminus: Protein MGF 110-7L (137 aa).

A signal peptide spans Met-1–Ser-20. 3 N-linked (GlcNAc...) asparagine; by host glycosylation sites follow: Asn-69, Asn-70, and Asn-105.

The protein belongs to the asfivirus MGF 110 family.

Functionally, plays a role in virus cell tropism, and may be required for efficient virus replication in macrophages. This is Protein MGF 110-7L from African swine fever virus (isolate Tick/South Africa/Pretoriuskop Pr4/1996) (ASFV).